The primary structure comprises 380 residues: tRNA-specific 2-thiouridylase MnmA (380 aa).

ATP is bound by residues 12–19 (GLSGGVDS) and Met-38. Residues 108–110 (NPD) form an interaction with target base in tRNA region. Cys-113 acts as the Nucleophile in catalysis. The cysteines at positions 113 and 210 are disulfide-linked. An ATP-binding site is contributed by Gly-138. The segment at 160-162 (KDQ) is interaction with tRNA. Residue Cys-210 is the Cysteine persulfide intermediate of the active site.

Belongs to the MnmA/TRMU family.

It is found in the cytoplasm. The enzyme catalyses S-sulfanyl-L-cysteinyl-[protein] + uridine(34) in tRNA + AH2 + ATP = 2-thiouridine(34) in tRNA + L-cysteinyl-[protein] + A + AMP + diphosphate + H(+). Functionally, catalyzes the 2-thiolation of uridine at the wobble position (U34) of tRNA, leading to the formation of s(2)U34. In Ureaplasma urealyticum serovar 10 (strain ATCC 33699 / Western), this protein is tRNA-specific 2-thiouridylase MnmA.